The sequence spans 324 residues: DNA primase small subunit PriS (324 aa).

Active-site residues include aspartate 94, aspartate 96, and aspartate 274.

It belongs to the eukaryotic-type primase small subunit family. Heterodimer of a small subunit (PriS) and a large subunit (PriL). The cofactor is Mg(2+). Requires Mn(2+) as cofactor.

Functionally, catalytic subunit of DNA primase, an RNA polymerase that catalyzes the synthesis of short RNA molecules used as primers for DNA polymerase during DNA replication. The small subunit contains the primase catalytic core and has DNA synthesis activity on its own. Binding to the large subunit stabilizes and modulates the activity, increasing the rate of DNA synthesis while decreasing the length of the DNA fragments, and conferring RNA synthesis capability. The DNA polymerase activity may enable DNA primase to also catalyze primer extension after primer synthesis. May also play a role in DNA repair. This is DNA primase small subunit PriS from Methanobrevibacter smithii (strain ATCC 35061 / DSM 861 / OCM 144 / PS).